A 587-amino-acid chain; its full sequence is FAD-dependent monooxygenase ankC (587 aa).

Residues 7–27 (AVDVLIIGAGPAGLIAAMWMA) form a helical membrane-spanning segment. 2 residues coordinate FAD: Tyr245 and Asp311.

It belongs to the PheA/TfdB FAD monooxygenase family. As to quaternary structure, homodimer. FAD is required as a cofactor.

The protein resides in the membrane. The catalysed reaction is cyclo(L-arginyl-L-dehydrotyrosyl) + AH2 + O2 = cyclo(L-arginyl-(Z)-dehydro-3,4-dihydroxytyrosyl) + A + H2O. It participates in secondary metabolite biosynthesis. Its function is as follows. FAD-dependent monooxygenase; part of the ank cluster that mediates the biosynthesis of NK13650 C, a highly modified cyclo-arginine-tyrosine dipeptide. AnkC uses as substrate the dehydro-cyclodipeptide intermediate generated by the monooxygase ankB and acts as a hydroxylase that installs the m-OH through a canonical flavin-dependent aromatic hydroxylation mechanism. Within the pathway, the cyclodipeptide synthase ankA acts as the scaffold-generating enzyme and is responsible for formation of the cyclo-Arg-Tyr diketopiperazine (cRY) from L-Arg and L-Tyr. The ankA product cRY is desaturated by the cytochrome P450 monooxygenase ankB to yield a dehydro-cyclodipeptide intermediate. The FAD-dependent monooxygenase ankC then installs the m-OH, ankD catalyzes the attachment of L-homoserine, and ankE ligates citrate to the ankD product to yield NK13650 B. The O-methyltransferase ankF is responsible for methylation of the C-17 phenol group of NK13650 B to produce NK13650 D. Amidation of NK13650 D with L-Asp by ankG then leads to the production of NK13650 C, whereas amidation of NK13650 B produces NK13650 A. The chain is FAD-dependent monooxygenase ankC from Aspergillus thermomutatus (Neosartorya pseudofischeri).